A 197-amino-acid chain; its full sequence is Imidazoleglycerol-phosphate dehydratase (197 aa).

It belongs to the imidazoleglycerol-phosphate dehydratase family.

It is found in the cytoplasm. It carries out the reaction D-erythro-1-(imidazol-4-yl)glycerol 3-phosphate = 3-(imidazol-4-yl)-2-oxopropyl phosphate + H2O. The protein operates within amino-acid biosynthesis; L-histidine biosynthesis; L-histidine from 5-phospho-alpha-D-ribose 1-diphosphate: step 6/9. This Novosphingobium aromaticivorans (strain ATCC 700278 / DSM 12444 / CCUG 56034 / CIP 105152 / NBRC 16084 / F199) protein is Imidazoleglycerol-phosphate dehydratase.